Reading from the N-terminus, the 148-residue chain is Putative FAD-linked sulfhydryl oxidase 096R (148 aa).

Positions 1–103 (MSIDPKLWGN…LAAKTVFQRY (103 aa)) constitute an ERV/ALR sulfhydryl oxidase domain. The cysteines at positions 48 and 51 are disulfide-linked. Residues 122 to 142 (WSPWLTTALAVILVVVVAGIG) traverse the membrane as a helical segment.

Belongs to the IIV-6 347L family. FAD is required as a cofactor.

Its subcellular location is the membrane. The enzyme catalyses 2 R'C(R)SH + O2 = R'C(R)S-S(R)CR' + H2O2. FAD-dependent sulfhydryl oxidase that catalyzes disulfide bond formation. The sequence is that of Putative FAD-linked sulfhydryl oxidase 096R from Aedes vexans (Inland floodwater mosquito).